A 176-amino-acid polypeptide reads, in one-letter code: Protein GrpE (176 aa).

This sequence belongs to the GrpE family. In terms of assembly, homodimer.

Its subcellular location is the cytoplasm. Functionally, participates actively in the response to hyperosmotic and heat shock by preventing the aggregation of stress-denatured proteins, in association with DnaK and GrpE. It is the nucleotide exchange factor for DnaK and may function as a thermosensor. Unfolded proteins bind initially to DnaJ; upon interaction with the DnaJ-bound protein, DnaK hydrolyzes its bound ATP, resulting in the formation of a stable complex. GrpE releases ADP from DnaK; ATP binding to DnaK triggers the release of the substrate protein, thus completing the reaction cycle. Several rounds of ATP-dependent interactions between DnaJ, DnaK and GrpE are required for fully efficient folding. In Meiothermus ruber, this protein is Protein GrpE.